A 310-amino-acid chain; its full sequence is Tetrahydromethanopterin S-methyltransferase subunit H (310 aa).

It belongs to the MtrH family. As to quaternary structure, the complex is composed of 8 subunits; MtrA, MtrB, MtrC, MtrD, MtrE, MtrF, MtrG and MtrH.

The enzyme catalyses 5-methyl-5,6,7,8-tetrahydromethanopterin + coenzyme M + 2 Na(+)(in) = 5,6,7,8-tetrahydromethanopterin + methyl-coenzyme M + 2 Na(+)(out). The protein operates within one-carbon metabolism; methanogenesis from CO(2); methyl-coenzyme M from 5,10-methylene-5,6,7,8-tetrahydromethanopterin: step 2/2. Part of a complex that catalyzes the formation of methyl-coenzyme M and tetrahydromethanopterin from coenzyme M and methyl-tetrahydromethanopterin. This is an energy-conserving, sodium-ion translocating step. MtrH catalyzes the transfer of the methyl group from methyl-tetrahydromethanopterin to the corrinoid prosthetic group of MtrA. The chain is Tetrahydromethanopterin S-methyltransferase subunit H from Methanothermobacter thermautotrophicus (strain ATCC 29096 / DSM 1053 / JCM 10044 / NBRC 100330 / Delta H) (Methanobacterium thermoautotrophicum).